Reading from the N-terminus, the 413-residue chain is Multidrug resistance protein MdtA (413 aa).

An N-terminal signal peptide occupies residues 1–20; that stretch reads MKGSNTFRWAIAIGVVVAAA. Disordered stretches follow at residues 31–57 and 392–413; these read SPTAAPGVAAQAPHTAAAGRRGMRDGP and PQTTMADEKSPSRHEGQKGARA. A compositionally biased stretch (basic and acidic residues) spans 397–413; the sequence is ADEKSPSRHEGQKGARA.

Belongs to the membrane fusion protein (MFP) (TC 8.A.1) family. Part of a tripartite efflux system composed of MdtA, MdtB and MdtC.

The protein resides in the cell inner membrane. The protein is Multidrug resistance protein MdtA of Salmonella heidelberg (strain SL476).